A 218-amino-acid chain; its full sequence is Fibroblast growth factor 15 (218 aa).

An N-terminal signal peptide occupies residues Met1–Gly25.

It belongs to the heparin-binding growth factors family. As to quaternary structure, interacts with MALRD1. As to expression, expressed in the developing brain.

The protein localises to the secreted. In terms of biological role, involved in the suppression of bile acid biosynthesis through down-regulation of CYP7A1 expression. The polypeptide is Fibroblast growth factor 15 (Fgf15) (Mus musculus (Mouse)).